The chain runs to 188 residues: Peptidyl-tRNA hydrolase (188 aa).

Residue Phe-14 participates in tRNA binding. The active-site Proton acceptor is the His-19. 3 residues coordinate tRNA: Tyr-64, Asn-66, and Asn-112.

It belongs to the PTH family. Monomer.

It is found in the cytoplasm. The enzyme catalyses an N-acyl-L-alpha-aminoacyl-tRNA + H2O = an N-acyl-L-amino acid + a tRNA + H(+). Hydrolyzes ribosome-free peptidyl-tRNAs (with 1 or more amino acids incorporated), which drop off the ribosome during protein synthesis, or as a result of ribosome stalling. Its function is as follows. Catalyzes the release of premature peptidyl moieties from peptidyl-tRNA molecules trapped in stalled 50S ribosomal subunits, and thus maintains levels of free tRNAs and 50S ribosomes. The protein is Peptidyl-tRNA hydrolase of Aster yellows witches'-broom phytoplasma (strain AYWB).